The sequence spans 177 residues: Translation initiation factor IF-3 (177 aa).

It belongs to the IF-3 family. As to quaternary structure, monomer.

The protein localises to the cytoplasm. IF-3 binds to the 30S ribosomal subunit and shifts the equilibrium between 70S ribosomes and their 50S and 30S subunits in favor of the free subunits, thus enhancing the availability of 30S subunits on which protein synthesis initiation begins. The protein is Translation initiation factor IF-3 of Elusimicrobium minutum (strain Pei191).